The chain runs to 402 residues: Sulfate adenylyltransferase (402 aa).

The protein belongs to the sulfate adenylyltransferase family.

It catalyses the reaction sulfate + ATP + H(+) = adenosine 5'-phosphosulfate + diphosphate. The protein operates within sulfur metabolism; hydrogen sulfide biosynthesis; sulfite from sulfate: step 1/3. The sequence is that of Sulfate adenylyltransferase from Ruthia magnifica subsp. Calyptogena magnifica.